Here is a 263-residue protein sequence, read N- to C-terminus: MSKRNAVTTFFTNRVTKALGMTLALMMTCQSAMASLAADQTRYIFRGDKDALTITVTNNDKERTFGGQAWVDNIVEKDTRPTFVVTPSFFKVKPNGQQTLRIIMASDHLPKDKESVYWLNLQDIPPALEGSGIAVAVRTKLKLFYRPKALIEGRKGAEEGISLQSRPDGRTMLVNTTPYIFAIGSLLDGNGKRIATDNETAQKLLMFMPGDEVQVKGNVVKVDSLNDYGELQTWTINQKKTPTSSGQKASDSLVNPSDKADKK.

The N-terminal stretch at methionine 1 to alanine 34 is a signal peptide. The segment covering glutamine 238–asparagine 255 has biased composition (polar residues). Residues glutamine 238–lysine 263 are disordered.

It belongs to the periplasmic pilus chaperone family.

The protein resides in the periplasm. Involved in the biogenesis of the CS31A capsule-like antigen. In Escherichia coli, this protein is Chaperone protein ClpE (clpE).